A 256-amino-acid polypeptide reads, in one-letter code: Calsenilin (256 aa).

Residues 1 to 20 form a disordered region; that stretch reads MQPAKEVTKASDGSLLGDLG. The residue at position 14 (Ser-14) is a Phosphoserine. Residue Lys-26 forms a Glycyl lysine isopeptide (Lys-Gly) (interchain with G-Cter in SUMO1) linkage. 2 S-palmitoyl cysteine lipidation sites follow: Cys-45 and Cys-46. A Phosphoserine modification is found at Ser-60. Ser-63 bears the Phosphoserine; by CK1 mark. The EF-hand 1; degenerate domain occupies 67–123; that stretch reads LELSTVRHQPEGLDQLQAQTKFTKKELQSLYRGFKNECPTGLVDEDTFKLIYAQFFP. Residue Lys-90 forms a Glycyl lysine isopeptide (Lys-Gly) (interchain with G-Cter in SUMO1) linkage. 3 EF-hand domains span residues 126-161, 162-197, and 210-245; these read DATT…LLRG, TVHE…IYDM, and APAE…DENI. Ca(2+) is bound by residues Asp-175, Asn-177, Asp-179, Tyr-181, Glu-186, Asp-223, Asn-225, Asp-227, and Glu-234. Residues 243–256 are interaction with KCND2; sequence ENIMSSMQLFENVI.

Belongs to the recoverin family. Binds to DNA as a homomultimer. Dimerization is induced by binding to calcium. Interacts with the C-terminus of PSEN1 and PSEN2 and with PSEN2 CTF subunit. Associates with KCN1. Component of heteromultimeric potassium channels. Identified in potassium channel complexes containing KCND1, KCND2, KCND3, KCNIP1, KCNIP2, KCNIP3, KCNIP4, DPP6 and DPP10. Interacts with KCND2 and KCND3. Post-translationally, palmitoylated. Palmitoylation enhances association with the plasma membrane. In terms of processing, proteolytically cleaved by caspase-3. Phosphorylation at Ser-63 inhibits cleavage by CASP3. In terms of tissue distribution, highly expressed in brain. Widely expressed at lower levels. Expression levels are elevated in brain cortex regions affected by Alzheimer disease.

Its subcellular location is the cytoplasm. It localises to the cell membrane. It is found in the endoplasmic reticulum. The protein resides in the golgi apparatus. The protein localises to the nucleus. Functionally, calcium-dependent transcriptional repressor that binds to the DRE element of genes including PDYN and FOS. Affinity for DNA is reduced upon binding to calcium and enhanced by binding to magnesium. Seems to be involved in nociception. In terms of biological role, regulatory subunit of Kv4/D (Shal)-type voltage-gated rapidly inactivating A-type potassium channels, such as KCND2/Kv4.2 and KCND3/Kv4.3. Modulates channel expression at the cell membrane, gating characteristics, inactivation kinetics and rate of recovery from inactivation in a calcium-dependent and isoform-specific manner. May play a role in the regulation of PSEN2 proteolytic processing and apoptosis. Together with PSEN2 involved in modulation of amyloid-beta formation. In Homo sapiens (Human), this protein is Calsenilin (KCNIP3).